The following is a 548-amino-acid chain: Membrane protein insertase YidC (548 aa).

The helical transmembrane segment at 6–26 threads the bilayer; that stretch reads NLLVIALLFVSFMIWQAWEQD. The tract at residues 28–55 is disordered; sequence NPQPQAQQTTQTTTTAAGSAADQGVPAS. A compositionally biased stretch (low complexity) spans 30 to 50; that stretch reads QPQAQQTTQTTTTAAGSAADQ. The next 4 membrane-spanning stretches (helical) occupy residues 350 to 370, 420 to 440, 458 to 478, and 499 to 519; these read FVGNWGFSIIIITFIVRGIMY, LGGCFPLLIQMPIFLALYYML, LSAQDPYYILPILMGVTMFFI, and PVIFTVFFLWFPSGLVLYYIV.

Belongs to the OXA1/ALB3/YidC family. Type 1 subfamily. As to quaternary structure, interacts with the Sec translocase complex via SecD. Specifically interacts with transmembrane segments of nascent integral membrane proteins during membrane integration.

The protein resides in the cell inner membrane. Its function is as follows. Required for the insertion and/or proper folding and/or complex formation of integral membrane proteins into the membrane. Involved in integration of membrane proteins that insert both dependently and independently of the Sec translocase complex, as well as at least some lipoproteins. Aids folding of multispanning membrane proteins. In Shigella boydii serotype 18 (strain CDC 3083-94 / BS512), this protein is Membrane protein insertase YidC.